A 124-amino-acid polypeptide reads, in one-letter code: Small ribosomal subunit protein uS12 (124 aa).

Asp89 is subject to 3-methylthioaspartic acid.

Belongs to the universal ribosomal protein uS12 family. Part of the 30S ribosomal subunit. Contacts proteins S8 and S17. May interact with IF1 in the 30S initiation complex.

With S4 and S5 plays an important role in translational accuracy. Functionally, interacts with and stabilizes bases of the 16S rRNA that are involved in tRNA selection in the A site and with the mRNA backbone. Located at the interface of the 30S and 50S subunits, it traverses the body of the 30S subunit contacting proteins on the other side and probably holding the rRNA structure together. The combined cluster of proteins S8, S12 and S17 appears to hold together the shoulder and platform of the 30S subunit. This chain is Small ribosomal subunit protein uS12, found in Serratia proteamaculans (strain 568).